A 350-amino-acid chain; its full sequence is fMet-Leu-Phe receptor (350 aa).

The Extracellular portion of the chain corresponds to 1–27 (METNSSLPTNISGGTPAVSAGYLFLDI). Residues asparagine 4 and asparagine 10 are each glycosylated (N-linked (GlcNAc...) asparagine). The helical transmembrane segment at 28–50 (ITYLVFAVTFVLGVLGNGLVIWV) threads the bilayer. Over 51 to 61 (AGFRMTHTVTT) the chain is Cytoplasmic. Residues 62–83 (ISYLNLAVADFCFTSTLPFFMV) traverse the membrane as a helical segment. Topologically, residues 84 to 100 (RKAMGGHWPFGWFLCKF) are extracellular. Cysteine 98 and cysteine 176 are oxidised to a cystine. The chain crosses the membrane as a helical span at residues 101–121 (VFTIVDINLFGSVFLIALIAL). Residues 122–140 (DRCVCVLHPVWTQNHRTVS) are Cytoplasmic-facing. Residues 141 to 162 (LAKKVIIGPWVMALLLTLPVII) traverse the membrane as a helical segment. Residues 163 to 205 (RVTTVPGKTGTVACTFNFSPWTNDPKERINVAVAMLTVRGIIR) are Extracellular-facing. The chain crosses the membrane as a helical span at residues 206–226 (FIIGFSAPMSIVAVSYGLIAT). Over 227-242 (KIHKQGLIKSSRPLRV) the chain is Cytoplasmic. A helical membrane pass occupies residues 243-266 (LSFVAAAFFLCWSPYQVVALIATV). Residues 267 to 285 (RIRELLQGMYKEIGIAVDV) are Extracellular-facing. A helical transmembrane segment spans residues 286 to 305 (TSALAFFNSCLNPMLYVFMG). Topologically, residues 306-350 (QDFRERLIHALPASLERALTEDSTQTSDTATNSTLPSAEVELQAK) are cytoplasmic. Positions 325–350 (TEDSTQTSDTATNSTLPSAEVELQAK) are disordered. Over residues 326 to 341 (EDSTQTSDTATNSTLP) the composition is skewed to polar residues. Position 328 is a phosphoserine (serine 328). Phosphothreonine is present on residues threonine 329 and threonine 331. A Phosphoserine modification is found at serine 332. A phosphothreonine mark is found at threonine 334 and threonine 336. Phosphoserine is present on serine 338. Position 339 is a phosphothreonine (threonine 339).

Belongs to the G-protein coupled receptor 1 family. In terms of assembly, interacts with S.aureus chemotaxis inhibitory protein (CHIPS); the interaction blocks the receptor and may thus inhibit the immune response. Phosphorylated; which is necessary for desensitization. In terms of tissue distribution, neutrophils.

The protein localises to the cell membrane. Functionally, high affinity receptor for N-formyl-methionyl peptides (fMLP), which are powerful neutrophil chemotactic factors. Binding of fMLP to the receptor stimulates intracellular calcium mobilization and superoxide anion release. This response is mediated via a G-protein that activates a phosphatidylinositol-calcium second messenger system. Receptor for TAFA4, mediates its effects on chemoattracting macrophages, promoting phagocytosis and increasing ROS release. Receptor for cathepsin CTSG, leading to increased phagocyte chemotaxis. This is fMet-Leu-Phe receptor (FPR1) from Homo sapiens (Human).